The sequence spans 428 residues: Probable protein phosphatase 2C 5 (428 aa).

The region spanning 25–297 (RSEKVEKPFV…DDTTCVVVDI (273 aa)) is the PPM-type phosphatase domain. Residues Asp73, Gly74, Asp249, and Asp288 each coordinate Mn(2+).

The protein belongs to the PP2C family. It depends on Mg(2+) as a cofactor. Requires Mn(2+) as cofactor.

It catalyses the reaction O-phospho-L-seryl-[protein] + H2O = L-seryl-[protein] + phosphate. The enzyme catalyses O-phospho-L-threonyl-[protein] + H2O = L-threonyl-[protein] + phosphate. The chain is Probable protein phosphatase 2C 5 from Arabidopsis thaliana (Mouse-ear cress).